Here is a 133-residue protein sequence, read N- to C-terminus: Small ribosomal subunit protein bS6 (133 aa).

It belongs to the bacterial ribosomal protein bS6 family.

In terms of biological role, binds together with bS18 to 16S ribosomal RNA. In Borrelia turicatae (strain 91E135), this protein is Small ribosomal subunit protein bS6.